We begin with the raw amino-acid sequence, 529 residues long: Transcription factor kayak (529 aa).

A compositionally biased stretch (polar residues) spans 118–134; the sequence is LQGTDSDNSNASWADAQ. 2 disordered regions span residues 118–166 and 180–239; these read LQGT…SVNG and NAGR…CRKR. Composition is skewed to low complexity over residues 142–153 and 182–201; these read TDTSSAHTDSTS and GRGS…TPAR. The bZIP domain occupies 219–282; the sequence is EEKRRIRRER…NQLEFFLRAH (64 aa). Residues 221-240 are basic motif; the sequence is KRRIRRERNKQAAARCRKRR. Residues 247–275 are leucine-zipper; it reads LTYEVEQLEKKRDGLKKEMETLTDVKNQL. Disordered stretches follow at residues 311–390 and 493–529; these read AGSC…PMST and DGGT…LVSL. Low complexity predominate over residues 315–332; it reads DSGSSSHHNNNSNDSSNG. Over residues 340–350 the composition is skewed to polar residues; sequence SLNSTGRSNSP. Serine 349 is subject to Phosphoserine. Low complexity predominate over residues 363–375; sequence DGGLDSSCLLDQD. Residues 376–387 are compositionally biased toward pro residues; that stretch reads GPPPSKRFPLPP.

Belongs to the bZIP family. Fos subfamily. As to quaternary structure, homodimer. Heterodimer with Jra. The kay-Jra heterodimer binds more stably to the AP-1 site than either of the two proteins alone.

It is found in the nucleus. Developmentally regulated transcription factor AP-1 binds and recognizes the enhancer DNA sequence: 5'-TGA[CG]TCA-3'. May play a role in the function or determination of a particular subset of cells in the developing embryo. Is able to carry out its function either independently of or in conjunction with Jra. This is Transcription factor kayak from Drosophila ananassae (Fruit fly).